Consider the following 455-residue polypeptide: Bifunctional protein GlmU (455 aa).

Positions methionine 1–lysine 227 are pyrophosphorylase. Residues leucine 9–glycine 12, lysine 23, glutamine 74, glycine 79–threonine 80, tyrosine 101–aspartate 103, glycine 137, glutamate 152, asparagine 167, and asparagine 225 contribute to the UDP-N-acetyl-alpha-D-glucosamine site. Aspartate 103 is a Mg(2+) binding site. Asparagine 225 contacts Mg(2+). The segment at valine 228–alanine 248 is linker. Positions glycine 249 to glycine 455 are N-acetyltransferase. UDP-N-acetyl-alpha-D-glucosamine-binding residues include arginine 331 and lysine 349. Histidine 361 (proton acceptor) is an active-site residue. UDP-N-acetyl-alpha-D-glucosamine is bound by residues tyrosine 364 and asparagine 375. Acetyl-CoA-binding positions include alanine 378, asparagine 384–tyrosine 385, serine 403, alanine 421, and arginine 438.

It in the N-terminal section; belongs to the N-acetylglucosamine-1-phosphate uridyltransferase family. The protein in the C-terminal section; belongs to the transferase hexapeptide repeat family. In terms of assembly, homotrimer. The cofactor is Mg(2+).

It is found in the cytoplasm. The enzyme catalyses alpha-D-glucosamine 1-phosphate + acetyl-CoA = N-acetyl-alpha-D-glucosamine 1-phosphate + CoA + H(+). The catalysed reaction is N-acetyl-alpha-D-glucosamine 1-phosphate + UTP + H(+) = UDP-N-acetyl-alpha-D-glucosamine + diphosphate. The protein operates within nucleotide-sugar biosynthesis; UDP-N-acetyl-alpha-D-glucosamine biosynthesis; N-acetyl-alpha-D-glucosamine 1-phosphate from alpha-D-glucosamine 6-phosphate (route II): step 2/2. It functions in the pathway nucleotide-sugar biosynthesis; UDP-N-acetyl-alpha-D-glucosamine biosynthesis; UDP-N-acetyl-alpha-D-glucosamine from N-acetyl-alpha-D-glucosamine 1-phosphate: step 1/1. It participates in bacterial outer membrane biogenesis; LPS lipid A biosynthesis. In terms of biological role, catalyzes the last two sequential reactions in the de novo biosynthetic pathway for UDP-N-acetylglucosamine (UDP-GlcNAc). The C-terminal domain catalyzes the transfer of acetyl group from acetyl coenzyme A to glucosamine-1-phosphate (GlcN-1-P) to produce N-acetylglucosamine-1-phosphate (GlcNAc-1-P), which is converted into UDP-GlcNAc by the transfer of uridine 5-monophosphate (from uridine 5-triphosphate), a reaction catalyzed by the N-terminal domain. The protein is Bifunctional protein GlmU of Chromobacterium violaceum (strain ATCC 12472 / DSM 30191 / JCM 1249 / CCUG 213 / NBRC 12614 / NCIMB 9131 / NCTC 9757 / MK).